A 154-amino-acid polypeptide reads, in one-letter code: Large ribosomal subunit protein uL13 (154 aa).

Residues 132-154 form a disordered region; the sequence is PHEAQQPEVLDVKSMNAKNTRSA.

The protein belongs to the universal ribosomal protein uL13 family. Part of the 50S ribosomal subunit.

This protein is one of the early assembly proteins of the 50S ribosomal subunit, although it is not seen to bind rRNA by itself. It is important during the early stages of 50S assembly. The protein is Large ribosomal subunit protein uL13 of Paracoccus denitrificans (strain Pd 1222).